A 216-amino-acid polypeptide reads, in one-letter code: Pyridoxine/pyridoxamine 5'-phosphate oxidase (216 aa).

Residues 12 to 15 and lysine 70 contribute to the substrate site; that span reads RREY. FMN contacts are provided by residues 65-70, 80-81, arginine 86, lysine 87, and glutamine 109; these read RVVLLK and YT. Positions 127 and 131 each coordinate substrate. FMN is bound by residues 144-145 and tryptophan 189; that span reads QS. A substrate-binding site is contributed by 195–197; it reads RLH. Arginine 199 serves as a coordination point for FMN.

It belongs to the pyridoxamine 5'-phosphate oxidase family. In terms of assembly, homodimer. Requires FMN as cofactor.

The enzyme catalyses pyridoxamine 5'-phosphate + O2 + H2O = pyridoxal 5'-phosphate + H2O2 + NH4(+). It catalyses the reaction pyridoxine 5'-phosphate + O2 = pyridoxal 5'-phosphate + H2O2. Its pathway is cofactor metabolism; pyridoxal 5'-phosphate salvage; pyridoxal 5'-phosphate from pyridoxamine 5'-phosphate: step 1/1. It functions in the pathway cofactor metabolism; pyridoxal 5'-phosphate salvage; pyridoxal 5'-phosphate from pyridoxine 5'-phosphate: step 1/1. Catalyzes the oxidation of either pyridoxine 5'-phosphate (PNP) or pyridoxamine 5'-phosphate (PMP) into pyridoxal 5'-phosphate (PLP). This Blochmanniella pennsylvanica (strain BPEN) protein is Pyridoxine/pyridoxamine 5'-phosphate oxidase.